We begin with the raw amino-acid sequence, 387 residues long: Succinate--CoA ligase [ADP-forming] subunit beta (387 aa).

The ATP-grasp domain occupies Lys9–Glu244. Residues Lys46, Gly53–Gly55, Glu99, Ala102, and Glu107 each bind ATP. Residues Asn199 and Asp213 each contribute to the Mg(2+) site. Substrate is bound by residues Asn264 and Gly321–Val323.

This sequence belongs to the succinate/malate CoA ligase beta subunit family. As to quaternary structure, heterotetramer of two alpha and two beta subunits. Mg(2+) is required as a cofactor.

It catalyses the reaction succinate + ATP + CoA = succinyl-CoA + ADP + phosphate. The enzyme catalyses GTP + succinate + CoA = succinyl-CoA + GDP + phosphate. It functions in the pathway carbohydrate metabolism; tricarboxylic acid cycle; succinate from succinyl-CoA (ligase route): step 1/1. Functionally, succinyl-CoA synthetase functions in the citric acid cycle (TCA), coupling the hydrolysis of succinyl-CoA to the synthesis of either ATP or GTP and thus represents the only step of substrate-level phosphorylation in the TCA. The beta subunit provides nucleotide specificity of the enzyme and binds the substrate succinate, while the binding sites for coenzyme A and phosphate are found in the alpha subunit. In Campylobacter jejuni subsp. jejuni serotype O:6 (strain 81116 / NCTC 11828), this protein is Succinate--CoA ligase [ADP-forming] subunit beta.